A 446-amino-acid chain; its full sequence is Exodeoxyribonuclease 7 large subunit (446 aa).

It belongs to the XseA family. Heterooligomer composed of large and small subunits.

The protein resides in the cytoplasm. It catalyses the reaction Exonucleolytic cleavage in either 5'- to 3'- or 3'- to 5'-direction to yield nucleoside 5'-phosphates.. Bidirectionally degrades single-stranded DNA into large acid-insoluble oligonucleotides, which are then degraded further into small acid-soluble oligonucleotides. This Xanthomonas campestris pv. campestris (strain B100) protein is Exodeoxyribonuclease 7 large subunit.